Here is a 312-residue protein sequence, read N- to C-terminus: Olfactory receptor 10K2 (312 aa).

Topologically, residues 1 to 25 are extracellular; sequence MERVNETVVREVIFLGFSSLARLQQ. N-linked (GlcNAc...) asparagine glycosylation occurs at N5. The helical transmembrane segment at 26 to 46 threads the bilayer; the sequence is LLFVIFLLLYLFTLGTNAIII. At 47–54 the chain is on the cytoplasmic side; that stretch reads STIVLDRA. The chain crosses the membrane as a helical span at residues 55 to 75; it reads LHIPMYFFLAILSCSEICYTF. The Extracellular segment spans residues 76–99; that stretch reads IIVPKMLVDLLSQKKTISFLGCAI. Residues 100 to 120 form a helical membrane-spanning segment; sequence QMFSFLFLGCSHSFLLAVMGY. Residues 121–139 lie on the Cytoplasmic side of the membrane; that stretch reads DRYIAICNPLRYSVLMGHG. A helical transmembrane segment spans residues 140 to 160; sequence VCMGLVAAACACGFTVAQIIT. Residues 161-197 lie on the Extracellular side of the membrane; that stretch reads SLVFHLPFYSSNQLHHFFCDIAPVLKLASHHNHFSQI. A helical transmembrane segment spans residues 198-217; sequence VIFMLCTLVLAIPLLLILVS. The Cytoplasmic segment spans residues 218–237; the sequence is YVHILSAILQFPSTLGRCKA. A helical membrane pass occupies residues 238–258; the sequence is FSTCVSHLIIVTVHYGCASFI. Residues 259–271 are Extracellular-facing; that stretch reads YLRPQSNYSSSQD. N265 is a glycosylation site (N-linked (GlcNAc...) asparagine). Residues 272–292 form a helical membrane-spanning segment; it reads ALISVSYTIITPLFNPMIYSL. The Cytoplasmic segment spans residues 293–312; the sequence is RNKEFKSALCKIVRRTISLL.

The protein belongs to the G-protein coupled receptor 1 family.

It is found in the cell membrane. Odorant receptor. In Homo sapiens (Human), this protein is Olfactory receptor 10K2 (OR10K2).